The following is a 179-amino-acid chain: Adenine phosphoribosyltransferase (179 aa).

This sequence belongs to the purine/pyrimidine phosphoribosyltransferase family. As to quaternary structure, homodimer.

The protein localises to the cytoplasm. It carries out the reaction AMP + diphosphate = 5-phospho-alpha-D-ribose 1-diphosphate + adenine. It participates in purine metabolism; AMP biosynthesis via salvage pathway; AMP from adenine: step 1/1. Its function is as follows. Catalyzes a salvage reaction resulting in the formation of AMP, that is energically less costly than de novo synthesis. This chain is Adenine phosphoribosyltransferase, found in Bradyrhizobium diazoefficiens (strain JCM 10833 / BCRC 13528 / IAM 13628 / NBRC 14792 / USDA 110).